Here is a 101-residue protein sequence, read N- to C-terminus: Conantokin-L (101 aa).

The signal sequence occupies residues 1 to 21; that stretch reads MQLYTYLYLLVPLVTFHLILG. A propeptide spanning residues 22–80 is cleaved from the precursor; that stretch reads TGTLDHGGALTERRSTDAIALKPEPVLLQKSSARSTDDNGNDRLTQMKRILKKRGNKAR. A 4-carboxyglutamate mark is found at Glu83, Glu84, Glu91, and Glu95. A divalent metal cation is bound by residues Glu91 and Glu95. Asn99 is modified (asparagine amide).

Belongs to the conotoxin B superfamily. The cofactor is Ca(2+). Mg(2+) serves as cofactor. Expressed by the venom duct.

It is found in the secreted. Functionally, conantokins inhibit N-methyl-D-aspartate (NMDA) receptors. This toxin is far less potent as an anticonvulsant compound than conantokin-R. It induces sleep-like symptoms in mice. The sequence is that of Conantokin-L from Conus lynceus (Lynceus cone).